The sequence spans 391 residues: Terminal nucleotidyltransferase 5C (391 aa).

It belongs to the TENT family. In terms of assembly, interacts with BCCIP and PABPC1; the interaction has no effect on TENT5C poly(A) polymerase function. Interacts with PLK4; this interaction leads to the TENT5C recruitment into the centrosome.

It is found in the nucleus. The protein resides in the cytoplasm. Its subcellular location is the cytoskeleton. The protein localises to the microtubule organizing center. It localises to the centrosome. The enzyme catalyses RNA(n) + ATP = RNA(n)-3'-adenine ribonucleotide + diphosphate. Functionally, catalyzes the transfer of one adenosine molecule from an ATP to an mRNA poly(A) tail bearing a 3'-OH terminal group and enhances mRNA stability and gene expression. Can also elongate RNA oligos ending with uridine molecule, provided that the sequence is adenosine-rich. Mainly targets mRNAs encoding endoplasmic reticulum-targeted protein. (Microbial infection) Seems to enhance replication of some viruses, including yellow fever virus, in response to type I interferon. This is Terminal nucleotidyltransferase 5C from Homo sapiens (Human).